The following is a 389-amino-acid chain: MVHATSQSASTEKNVKPCIETDTEEVNHKNQTKQYLSESESGDEYDEDLENAVSECSYQTATTSSVADTDISNICDQLLVLSTTNHKSMGSTRGKKKRGKTAKKAKKANRAQKITEEEIEAIKKKKKLDADKAYELRQEQMKIRQEKIDASDRNKIYRRLAQTAVDMLRKEERKLPPEIKQLDEDLEYYVENSKFYLRINLRDRYLETRVDEISEKYIGPALEHKTELLKIYEDLIKRSLQAFRLFMFLKTLNEKSVDYTKFEVLTLSFVMKGFEDDWLEVNGTYEENESYLSFEKNILHDIPETDQHVNAAEFVMNKLIYYAKKDDDGTLNLKECHMKEAYTGAGQLIAEYKQCTNAIAFLQDNRENLAYNLMEEWFLVSRKPSPIVL.

The segment covering 1 to 12 (MVHATSQSASTE) has biased composition (polar residues). Disordered regions lie at residues 1–49 (MVHA…DEDL) and 86–111 (HKSMGSTRGKKKRGKTAKKAKKANRA). The span at 40–49 (ESGDEYDEDL) shows a compositional bias: acidic residues. Residues 93–110 (RGKKKRGKTAKKAKKANR) show a composition bias toward basic residues.

This is an uncharacterized protein from Caenorhabditis elegans.